We begin with the raw amino-acid sequence, 342 residues long: S-adenosylmethionine:tRNA ribosyltransferase-isomerase (342 aa).

It belongs to the QueA family. As to quaternary structure, monomer.

The protein resides in the cytoplasm. It carries out the reaction 7-aminomethyl-7-carbaguanosine(34) in tRNA + S-adenosyl-L-methionine = epoxyqueuosine(34) in tRNA + adenine + L-methionine + 2 H(+). Its pathway is tRNA modification; tRNA-queuosine biosynthesis. Transfers and isomerizes the ribose moiety from AdoMet to the 7-aminomethyl group of 7-deazaguanine (preQ1-tRNA) to give epoxyqueuosine (oQ-tRNA). In Bacillus pumilus (strain SAFR-032), this protein is S-adenosylmethionine:tRNA ribosyltransferase-isomerase.